Here is a 245-residue protein sequence, read N- to C-terminus: 1-(5-phosphoribosyl)-5-[(5-phosphoribosylamino)methylideneamino] imidazole-4-carboxamide isomerase (245 aa).

Asp8 (proton acceptor) is an active-site residue. The active-site Proton donor is Asp130.

Belongs to the HisA/HisF family.

Its subcellular location is the cytoplasm. It carries out the reaction 1-(5-phospho-beta-D-ribosyl)-5-[(5-phospho-beta-D-ribosylamino)methylideneamino]imidazole-4-carboxamide = 5-[(5-phospho-1-deoxy-D-ribulos-1-ylimino)methylamino]-1-(5-phospho-beta-D-ribosyl)imidazole-4-carboxamide. It functions in the pathway amino-acid biosynthesis; L-histidine biosynthesis; L-histidine from 5-phospho-alpha-D-ribose 1-diphosphate: step 4/9. The chain is 1-(5-phosphoribosyl)-5-[(5-phosphoribosylamino)methylideneamino] imidazole-4-carboxamide isomerase from Pseudomonas putida (strain ATCC 47054 / DSM 6125 / CFBP 8728 / NCIMB 11950 / KT2440).